The chain runs to 177 residues: MSRVAKNPVKLPAGVEVKFAGQQLSVKGAKGTLELNVHSSVEVVEEAGELRFAARNGDQQTRAMAGTTRALVNNMVQGVSQGFERKLQLVGVGYKAQAKGQVLNLALGFSHPVDYELPEGITAETPSQTDILIKGIDKQLVGQVAAEIRDFRPPEPYKGKGVRYADEVVRRKEAKKK.

Belongs to the universal ribosomal protein uL6 family. As to quaternary structure, part of the 50S ribosomal subunit.

Functionally, this protein binds to the 23S rRNA, and is important in its secondary structure. It is located near the subunit interface in the base of the L7/L12 stalk, and near the tRNA binding site of the peptidyltransferase center. In Pseudomonas fluorescens (strain Pf0-1), this protein is Large ribosomal subunit protein uL6.